Consider the following 274-residue polypeptide: Thiamine kinase (274 aa).

Belongs to the thiamine kinase family.

It carries out the reaction thiamine + ATP = thiamine phosphate + ADP + H(+). It participates in cofactor biosynthesis; thiamine diphosphate biosynthesis; thiamine phosphate from thiamine: step 1/1. In terms of biological role, catalyzes the ATP-dependent phosphorylation of thiamine to thiamine phosphate. Is involved in thiamine salvage. This is Thiamine kinase from Escherichia coli O81 (strain ED1a).